The primary structure comprises 241 residues: Probable transcriptional regulatory protein LHK_02347 (241 aa).

It belongs to the TACO1 family.

Its subcellular location is the cytoplasm. The sequence is that of Probable transcriptional regulatory protein LHK_02347 from Laribacter hongkongensis (strain HLHK9).